A 424-amino-acid polypeptide reads, in one-letter code: Solute carrier family 67 member A1 (424 aa).

The next 10 helical transmembrane spans lie at 26-46, 59-79, 90-110, 156-176, 184-204, 243-263, 276-296, 312-332, 334-354, and 391-411; these read ILLTYVLAATELTCLFMQFSI, IAFGYLQTTFGVLQLLGGPVF, AALTLSFLAALALYLLLAAAS, LGLCFGVGVILGSLLGGTLVS, AILAALATLLGAVLSFTCIPA, IFLVKVASNCPTGLFMVMFSI, AGYLMSFFGLLQMVTQGLVIG, VLVFIVVGLAMAWMSSVFHFC, LVPGLVFSLCTLNVVTDSMLI, and FGVPVFGHVQVAINTLVLLVL.

Belongs to the major facilitator (TC 2.A.1) superfamily. Organic cation transporter (TC 2.A.1.19) family. In terms of assembly, interacts with RNF167. Expressed at high levels in adult and fetal kidney and liver, and adult colon. Expressed in fetal renal proximal tubules (at protein level). Expressed at lower levels in heart, brain and lung.

It localises to the apical cell membrane. Functionally, may act as a transporter of organic cations based on a proton efflux antiport mechanism. May play a role in the transport of chloroquine and quinidine-related compounds in kidney. Plays a role in the regulation of lipid metabolism. The chain is Solute carrier family 67 member A1 from Homo sapiens (Human).